The chain runs to 300 residues: Peptidyl-prolyl cis-trans isomerase E (300 aa).

The 79-residue stretch at arginine 6–proline 84 folds into the RRM domain. A PPIase cyclophilin-type domain is found at phenylalanine 142 to glutamate 298.

The protein belongs to the cyclophilin-type PPIase family. PPIase E subfamily.

It localises to the nucleus. It carries out the reaction [protein]-peptidylproline (omega=180) = [protein]-peptidylproline (omega=0). Functionally, PPIases accelerate the folding of proteins. It catalyzes the cis-trans isomerization of proline imidic peptide bonds in oligopeptides. Combines RNA-binding and PPIase activities. The polypeptide is Peptidyl-prolyl cis-trans isomerase E (cyp33) (Drosophila melanogaster (Fruit fly)).